Reading from the N-terminus, the 811-residue chain is G-type lectin S-receptor-like serine/threonine-protein kinase LECRK2 (811 aa).

Residues 1–23 form the signal peptide; the sequence is MAPLLFLPILQLLLLYCTKSAQA. The region spanning 24–153 is the Bulb-type lectin domain; it reads QLNISIGSSL…DGATKWESFG (130 aa). The Extracellular portion of the chain corresponds to 24-464; it reads QLNISIGSSL…DKKYWILGSS (441 aa). 7 N-linked (GlcNAc...) asparagine glycosylation sites follow: asparagine 26, asparagine 39, asparagine 59, asparagine 219, asparagine 226, asparagine 237, and asparagine 242. Positions 292–344 constitute an EGF-like; atypical domain; it reads PENICQTIQTKVGSGACGFNSYCTFDGTKNTTNCLCPQRYKFFDNERTYKGCR. Disulfide bonds link cysteine 296–cysteine 314, cysteine 308–cysteine 325, cysteine 327–cysteine 343, cysteine 389–cysteine 411, and cysteine 393–cysteine 399. Asparagine 321 is a glycosylation site (N-linked (GlcNAc...) asparagine). In terms of domain architecture, PAN spans 352–436; that stretch reads CDLDETAAMV…LQATVLLKVP (85 aa). Residues 465–485 traverse the membrane as a helical segment; it reads LFFGSSVLVNFLLIFVLLFGT. The Cytoplasmic segment spans residues 486 to 811; sequence YCSITSRKKT…DPSSYISSLA (326 aa). The Protein kinase domain occupies 521-795; it reads GGFHEVLGTG…KVMQMLDGAV (275 aa). Residues 527–535 and lysine 551 each bind ATP; that span reads LGTGASGIV. Aspartate 645 serves as the catalytic Proton acceptor.

This sequence belongs to the protein kinase superfamily. Ser/Thr protein kinase family.

It localises to the membrane. The enzyme catalyses L-seryl-[protein] + ATP = O-phospho-L-seryl-[protein] + ADP + H(+). It carries out the reaction L-threonyl-[protein] + ATP = O-phospho-L-threonyl-[protein] + ADP + H(+). Its function is as follows. Involved in resistance against the herbivorous insect brown planthopper (N.lugens, BPH). Member of the BPH3 (BPH resistance locus 3) cluster which contains LECRK1, LECRK2 and LECRK3. The protein is G-type lectin S-receptor-like serine/threonine-protein kinase LECRK2 of Oryza sativa subsp. japonica (Rice).